A 469-amino-acid chain; its full sequence is MTRPVRTRFAPSPTGFIHLGNIRSALYPWAFARKMKGTFVLRIEDTDVERSSQEAVDAILEGMAWLGLDYDEGPYYQMQRMDRYREVLAQMQEKGLVYPCYMSTEELDALRERQRAAGEKPRYDGTWRPEPGKVLPEPPAGVAPVLRFRNPLTGTVAWDDAVKGRVEISNEELDDLVVARPDGTPMYNFCVVVDDLDMGITHVIRGDDHVNNTPRQINILRALGGEVPVYAHLPTVLNEQGEKMSKRHGAMSVMGYRDAGYLPEAVLNYLARLGWSHGDAEIFTREQFVEWFDLEHLGKSPAQYDHNKLNWLNNHYIKEADDARLAGLAKPFFAALGIDAGAIEQGPDLVSVMGLMKDRASTVKEIAENSAMFYRAPAPGADALAQHVTDAVRPALVEFAAALKTVEWTKEAIAAALKAVLGAHKLKMPQLAMPVRLLVAGTTHTPSIDAVLLLFGRDVVVSRIEAALA.

A 'HIGH' region motif is present at residues 11–21; the sequence is PSPTGFIHLGN. The segment covering 118–131 has biased composition (basic and acidic residues); it reads GEKPRYDGTWRPEP. The tract at residues 118–138 is disordered; the sequence is GEKPRYDGTWRPEPGKVLPEP. A 'KMSKS' region motif is present at residues 243-247; sequence KMSKR. Lys-246 is a binding site for ATP.

The protein belongs to the class-I aminoacyl-tRNA synthetase family. Glutamate--tRNA ligase type 1 subfamily. Monomer.

It is found in the cytoplasm. The enzyme catalyses tRNA(Glu) + L-glutamate + ATP = L-glutamyl-tRNA(Glu) + AMP + diphosphate. Functionally, catalyzes the attachment of glutamate to tRNA(Glu) in a two-step reaction: glutamate is first activated by ATP to form Glu-AMP and then transferred to the acceptor end of tRNA(Glu). This chain is Glutamate--tRNA ligase, found in Burkholderia thailandensis (strain ATCC 700388 / DSM 13276 / CCUG 48851 / CIP 106301 / E264).